Reading from the N-terminus, the 1919-residue chain is Disks large homolog 5 (1919 aa).

The disordered stretch occupies residues 98 to 142 (AEGAGSTYSVLSTMPSDSESSSSLSSVGTTGKAPSPPPLLTDQQV). Low complexity predominate over residues 109 to 123 (STMPSDSESSSSLSS). Ser-264 and Ser-295 each carry phosphoserine. Residues 383–599 (LNKATAQNKD…LEKEARFRQL (217 aa)) are a coiled coil. 2 consecutive PDZ domains span residues 620 to 710 (VVEF…RRRK) and 705 to 796 (VVRR…LKVF). A Phosphoserine modification is found at Ser-900. Disordered regions lie at residues 927–1122 (GVGE…FRPK), 1150–1187 (QEWA…PSTT), 1201–1230 (SHRV…HQGR), 1245–1264 (EMRA…LGSS), and 1271–1306 (AERI…PQSP). Thr-984 is subject to Phosphothreonine. Ser-1000 bears the Phosphoserine mark. Residue Thr-1011 is modified to Phosphothreonine. A compositionally biased stretch (basic and acidic residues) spans 1017–1030 (RRSDSIKFQHRLET). At Ser-1021 the chain carries Phosphoserine. Residues 1045 to 1055 (TSPPSALPPDV) show a composition bias toward pro residues. Thr-1183 carries the post-translational modification Phosphothreonine. 2 positions are modified to phosphoserine: Ser-1209 and Ser-1263. Composition is skewed to low complexity over residues 1252–1264 (SNSL…LGSS) and 1284–1298 (RSVV…SHSE). Ser-1334 bears the Phosphoserine mark. The region spanning 1350 to 1429 (HVKVQKGSEP…TITILAQYNP (80 aa)) is the PDZ 3 domain. Positions 1434-1493 (LSSHSRSSSHLDPAGTHSTLQGSGTTTPEHPSVIDPLMEQDEGPSTPPAKQSSSRIAGDA) are disordered. A compositionally biased stretch (polar residues) spans 1449-1462 (THSTLQGSGTTTPE). The PDZ 4 domain maps to 1501–1582 (RVVFIKKSQL…GVRLKVQYRP (82 aa)). The region spanning 1593–1661 (GDSFYIRALY…PSKYVMDQEF (69 aa)) is the SH3 domain. Ser-1666 is subject to Phosphoserine. The Guanylate kinase-like domain maps to 1722–1905 (DSVSLAYQRV…ICTQILAMVN (184 aa)).

Belongs to the MAGUK family. Interacts with MPP1. Interacts with CTNNB1 and with the third SH3 domain of SORBS3 to form a ternary complex. Interacts (via coiled-coil domain) with MARK3. Interacts (via PDZ domain 3) with STK3/MST2 and STK4/MST1. Interacts with SCRIB. Interacts with CTNB1, SMO and (via PDZ4 or guanylate kinase-like domain) with KIF7. In terms of tissue distribution, highly expressed in normal breast tissues and low-grade breast cancer tissues (at protein level). Highly expressed in the placenta and prostate. Expressed at a lower level in the thyroid, spinal cord, trachea, adrenal gland, skeletal muscle, pancreas, heart, brain, liver and kidney. A short splice product shows more limited expression, being absent from at least the brain.

It localises to the cell junction. Its subcellular location is the cell membrane. The protein resides in the postsynaptic density. The protein localises to the cytoplasm. It is found in the cytoskeleton. It localises to the cilium basal body. Functionally, acts as a regulator of the Hippo signaling pathway. Negatively regulates the Hippo signaling pathway by mediating the interaction of MARK3 with STK3/4, bringing them together to promote MARK3-dependent hyperphosphorylation and inactivation of STK3 kinase activity toward LATS1. Positively regulates the Hippo signaling pathway by mediating the interaction of SCRIB with STK4/MST1 and LATS1 which is important for the activation of the Hippo signaling pathway. Involved in regulating cell proliferation, maintenance of epithelial polarity, epithelial-mesenchymal transition (EMT), cell migration and invasion. Plays an important role in dendritic spine formation and synaptogenesis in cortical neurons; regulates synaptogenesis by enhancing the cell surface localization of N-cadherin. Acts as a positive regulator of hedgehog (Hh) signaling pathway. Plays a critical role in the early point of the SMO activity cycle by interacting with SMO at the ciliary base to induce the accumulation of KIF7 and GLI2 at the ciliary tip for GLI2 activation. This is Disks large homolog 5 (DLG5) from Homo sapiens (Human).